The following is a 625-amino-acid chain: Glutamyl-tRNA(Gln) amidotransferase subunit E (625 aa).

Belongs to the GatB/GatE family. GatE subfamily. As to quaternary structure, heterodimer of GatD and GatE.

It catalyses the reaction L-glutamyl-tRNA(Gln) + L-glutamine + ATP + H2O = L-glutaminyl-tRNA(Gln) + L-glutamate + ADP + phosphate + H(+). Its function is as follows. Allows the formation of correctly charged Gln-tRNA(Gln) through the transamidation of misacylated Glu-tRNA(Gln) in organisms which lack glutaminyl-tRNA synthetase. The reaction takes place in the presence of glutamine and ATP through an activated gamma-phospho-Glu-tRNA(Gln). The GatDE system is specific for glutamate and does not act on aspartate. This is Glutamyl-tRNA(Gln) amidotransferase subunit E from Caldivirga maquilingensis (strain ATCC 700844 / DSM 13496 / JCM 10307 / IC-167).